A 60-amino-acid polypeptide reads, in one-letter code: Conotoxin Cal6.30 (60 aa).

Positions 1–22 (MKVTCVLTLAVLILTIGQIANA) are cleaved as a signal peptide. Cystine bridges form between cysteine 31/cysteine 47, cysteine 38/cysteine 51, and cysteine 46/cysteine 55.

In terms of tissue distribution, expressed by the venom duct.

It is found in the secreted. Probable neurotoxin. This is Conotoxin Cal6.30 from Californiconus californicus (California cone).